Reading from the N-terminus, the 415-residue chain is Protein fuzzy homolog (415 aa).

The protein belongs to the fuzzy family. Component of the CPLANE (ciliogenesis and planar polarity effectors) complex, composed of INTU, FUZ and WDPCP. Interacts with CPLANE1. Interacts with CPLANE2. In terms of tissue distribution, expressed in dermal and epidermal cells.

The protein localises to the cytoplasm. The protein resides in the cytoskeleton. It is found in the cilium basal body. Its function is as follows. Probable planar cell polarity effector involved in cilium biogenesis. May regulate protein and membrane transport to the cilium. Proposed to function as core component of the CPLANE (ciliogenesis and planar polarity effectors) complex involved in the recruitment of peripheral IFT-A proteins to basal bodies. May regulate the morphogenesis of hair follicles which depends on functional primary cilia. Binds phosphatidylinositol 3-phosphate with highest affinity, followed by phosphatidylinositol 4-phosphate and phosphatidylinositol 5-phosphate. This is Protein fuzzy homolog (Fuz) from Mus musculus (Mouse).